The sequence spans 1245 residues: ATP-dependent helicase/deoxyribonuclease subunit B (1245 aa).

The disordered stretch occupies residues 737–758 (WDDQNNAPTTDLPDRPNPRASE). The segment covering 748–758 (LPDRPNPRASE) has biased composition (basic and acidic residues).

This sequence belongs to the helicase family. AddB/RexB type 2 subfamily. As to quaternary structure, heterodimer of AddA and RexB. Requires Mg(2+) as cofactor.

Its function is as follows. The heterodimer acts as both an ATP-dependent DNA helicase and an ATP-dependent, dual-direction single-stranded exonuclease. Recognizes the chi site generating a DNA molecule suitable for the initiation of homologous recombination. This subunit has 5' -&gt; 3' nuclease activity but not helicase activity. The sequence is that of ATP-dependent helicase/deoxyribonuclease subunit B from Limosilactobacillus fermentum (strain NBRC 3956 / LMG 18251) (Lactobacillus fermentum).